Here is a 690-residue protein sequence, read N- to C-terminus: Eukaryotic translation initiation factor 3 subunit B (690 aa).

Over residues 1-11 (MAKKKSEEHSG) the composition is skewed to basic and acidic residues. The interval 1–36 (MAKKKSEEHSGADANDSDYQEEPNFEDPPGFVDNIS) is disordered. A compositionally biased stretch (acidic residues) spans 15–25 (NDSDYQEEPNF). One can recognise an RRM domain in the interval 57-141 (SVVVVDNIPK…HTFAVNLFTD (85 aa)). 5 WD repeats span residues 207–246 (TRERFTDTFVKWSPLGTYVVTFHKPGVAIWGGSSFQKIQK), 293–331 (DGMSVLSMFRWSHDDKFVARMGENSIHIYETPSFFLLDL), 334–369 (IKIPGIRGFSWSPTDNVIAYWVEEQNQIPARVTLME), 442–484 (EIRE…KPSL), and 530–575 (PDHF…IKRT). Residues 595–645 (EEKQKEIKKNLKKYYAAFEQKDRLRLTRASKELLEKRSQLRETFMEYRNKR) adopt a coiled-coil conformation.

This sequence belongs to the eIF-3 subunit B family. Component of the eukaryotic translation initiation factor 3 (eIF-3) complex. The eIF-3 complex interacts with pix. Interacts with mxt.

It is found in the cytoplasm. Its function is as follows. RNA-binding component of the eukaryotic translation initiation factor 3 (eIF-3) complex, which is involved in protein synthesis of a specialized repertoire of mRNAs and, together with other initiation factors, stimulates binding of mRNA and methionyl-tRNAi to the 40S ribosome. The eIF-3 complex specifically targets and initiates translation of a subset of mRNAs involved in cell proliferation. This Drosophila yakuba (Fruit fly) protein is Eukaryotic translation initiation factor 3 subunit B.